We begin with the raw amino-acid sequence, 87 residues long: uncharacterized protein (87 aa).

A helical membrane pass occupies residues 29–49 (ILWMIIFVVIIAVIIYILISP).

It is found in the membrane. This is an uncharacterized protein from Methanocaldococcus jannaschii (strain ATCC 43067 / DSM 2661 / JAL-1 / JCM 10045 / NBRC 100440) (Methanococcus jannaschii).